The primary structure comprises 414 residues: Putative F-box/kelch-repeat protein At1g20940 (414 aa).

Positions 13 to 65 constitute an F-box domain; the sequence is SSIINDLPLDLLDEILFRLEPKSMAMMRCTNNSIKSYLSDPRFGPEYPSWVRP. 2 Kelch repeats span residues 281 to 328 and 331 to 378; these read LTLI…MYDG and LVVR…KLTP.

In terms of assembly, interacts with DEK3.

The protein operates within protein modification; protein ubiquitination. In terms of biological role, probable component of an E3 ubiquitin ligase complex. The polypeptide is Putative F-box/kelch-repeat protein At1g20940 (Arabidopsis thaliana (Mouse-ear cress)).